The primary structure comprises 288 residues: Probable pectinesterase 56 (288 aa).

Residues 1–27 (MAMTSTMQLLVLSFLVIASLFLGATVA) form the signal peptide. Asn-55 and Asn-95 each carry an N-linked (GlcNAc...) asparagine glycan. Residues Thr-120 and Gln-150 each coordinate substrate. Asp-173 functions as the Proton donor in the catalytic mechanism. The Nucleophile role is filled by Asp-194. The N-linked (GlcNAc...) asparagine glycan is linked to Asn-242. Substrate-binding residues include Arg-262 and Trp-264.

The protein belongs to the pectinesterase family.

Its subcellular location is the secreted. The protein localises to the cell wall. It catalyses the reaction [(1-&gt;4)-alpha-D-galacturonosyl methyl ester](n) + n H2O = [(1-&gt;4)-alpha-D-galacturonosyl](n) + n methanol + n H(+). It participates in glycan metabolism; pectin degradation; 2-dehydro-3-deoxy-D-gluconate from pectin: step 1/5. In terms of biological role, acts in the modification of cell walls via demethylesterification of cell wall pectin. The polypeptide is Probable pectinesterase 56 (PME56) (Arabidopsis thaliana (Mouse-ear cress)).